The primary structure comprises 460 residues: ATP synthase subunit beta (460 aa).

Residue 150–157 (GGAGVGKT) participates in ATP binding.

The protein belongs to the ATPase alpha/beta chains family. In terms of assembly, F-type ATPases have 2 components, CF(1) - the catalytic core - and CF(0) - the membrane proton channel. CF(1) has five subunits: alpha(3), beta(3), gamma(1), delta(1), epsilon(1). CF(0) has three main subunits: a(1), b(2) and c(9-12). The alpha and beta chains form an alternating ring which encloses part of the gamma chain. CF(1) is attached to CF(0) by a central stalk formed by the gamma and epsilon chains, while a peripheral stalk is formed by the delta and b chains.

The protein localises to the cell inner membrane. It carries out the reaction ATP + H2O + 4 H(+)(in) = ADP + phosphate + 5 H(+)(out). In terms of biological role, produces ATP from ADP in the presence of a proton gradient across the membrane. The catalytic sites are hosted primarily by the beta subunits. The protein is ATP synthase subunit beta of Citrobacter koseri (strain ATCC BAA-895 / CDC 4225-83 / SGSC4696).